The primary structure comprises 772 residues: Mitochondrial intermediate peptidase (772 aa).

A mitochondrion-targeting transit peptide spans 1-37 (MLRTIILKAGSNASIPSPSRQNKLLRFFATAGAVSRT). His-558 contacts Zn(2+). Glu-559 is an active-site residue. The Zn(2+) site is built by His-562 and Glu-587.

This sequence belongs to the peptidase M3 family. It depends on Zn(2+) as a cofactor.

It localises to the mitochondrion matrix. The enzyme catalyses Release of an N-terminal octapeptide as second stage of processing of some proteins imported into the mitochondrion.. Its activity is regulated as follows. Stimulated by Fe(2+). In terms of biological role, cleaves proteins, imported into the mitochondrion, to their mature size. While most mitochondrial precursor proteins are processed to the mature form in one step by mitochondrial processing peptidase (MPP), the sequential cleavage by MIP of an octapeptide after initial processing by MPP is a required step for a subgroup of nuclear-encoded precursor proteins destined for the matrix or the inner membrane. Cleaves precursor proteins of respiratory components, including subunits of the electron transport chain and tricarboxylic acid cycle enzymes, and components of the mitochondrial genetic machinery, including ribosomal proteins, translation factors, and proteins required for mitochondrial DNA metabolism. In Saccharomyces cerevisiae (strain ATCC 204508 / S288c) (Baker's yeast), this protein is Mitochondrial intermediate peptidase (OCT1).